Consider the following 334-residue polypeptide: tRNA uridine(34) hydroxylase (334 aa).

Residues 123–217 form the Rhodanese domain; that stretch reads SDPDVILVDT…YLEEVKAEES (95 aa). C177 (cysteine persulfide intermediate) is an active-site residue.

It belongs to the TrhO family.

The enzyme catalyses uridine(34) in tRNA + AH2 + O2 = 5-hydroxyuridine(34) in tRNA + A + H2O. Catalyzes oxygen-dependent 5-hydroxyuridine (ho5U) modification at position 34 in tRNAs. The polypeptide is tRNA uridine(34) hydroxylase (Shewanella baltica (strain OS223)).